We begin with the raw amino-acid sequence, 990 residues long: MDNQAVVDLAIVVDATGSMGTFLSSLSESLQQIVQIIDITNVIQNINIIMYRDYCDSVITASSGWVSKIDDLIPFIRGLRASGGGDTPEAGKTAANNLLDVVKNNTIVIWYADAPPHHKSNARDNFAREINTLIGSDKIFDWIELCDTLAARNIIVYPIINRHHFDTSSFYVAMSTITGGKTLYLESTNEKIITQTTIKLLLSLMGCDNEFKSGVKELVYGSEFNRSSILDENNNAGYLPGTRSSILVNTVDLQVQTHPWLITNLRSLVSLFNADSHYKDKIFAVFKSLMKPTSVLSLTYNTIFATFWRLICRTYDDPRKEVLKEQMSVVLENLKKTNREDHVVVTEWISDSYNQTYEVNDIIKTKAVSKVPALVLDTTRFYLPQEILELSRTCNAKVLSTVVDMLSSIRLIEKEEDLPKTNEQELDSKGRPIPLKYIPLSLPNKYLFSILPHLIAPGSNFSLRPSMILATVAYITNNQILKDRAKNHLEYHKGKWIDQSLPENYTGGFINLMLRVPEFLTDEEISFFKFYQKVFGLLINGSTELDIDMPFTPYKKVCNDFKRECDHCHHIRSFTLLTIDDDGKYKCGLCHSPADDDTDTLNRVYTIISCDTPGETGMTISKDTTLGPSSKEHQDDYHSVYLECKSCLCHYALVNVDKMNVTPKCYGCRFDVYLPNVKCIICTNKYVDPAKIYSDNSETFVCPQCVSDPRSSIDILKVKFKDIYLQNKSTIHSLVGFEMPSDINVFGGHSIFSIKDKINILDHTENPTSLVFNRKFMLNAPIVIIEMLKWINSGSAEKGLCMICFNEFSKSNLRQICGRKVCQSVACYDCMKSWYGENKVGDLIHVNALTCPFCKQCPMFNILAAFNRQVCAMVRTNNSFDIDWWYGWCLKCFQPKKVVEKECSEDAPQLGGKFICEECSNVKPENSKECPNSLCKIPIIKDGGCNHMECTACKKHFCWLCANVSYETSEETYDHLYKIHGGAFEYDQDD.

The 194-residue stretch at 8–201 (DLAIVVDATG…IITQTTIKLL (194 aa)) folds into the VWFA domain. Residues 797-990 (EKGLCMICFN…GGAFEYDQDD (194 aa)) form a TRIAD supradomain region. 4 residues coordinate Zn(2+): cysteine 801, cysteine 804, cysteine 827, and cysteine 830. An RING-type 1 zinc finger spans residues 801–854 (CMICFNEFSKSNLRQICGRKVCQSVACYDCMKSWYGENKVGDLIHVNALTCPFC). The IBR-type zinc-finger motif lies at 855–903 (KQCPMFNILAAFNRQVCAMVRTNNSFDIDWWYGWCLKCFQPKKVVEKEC). Positions 930 and 935 each coordinate Zn(2+). Residues 930–961 (CPNSLCKIPIIKDGGCNHMECTACKKHFCWLC) form an RING-type 2; atypical zinc finger. Residue cysteine 945 is part of the active site. The Zn(2+) site is built by cysteine 950 and cysteine 953.

The polypeptide is Putative ariadne-like RING finger protein R811 (Acanthamoeba polyphaga (Amoeba)).